A 150-amino-acid chain; its full sequence is Ribonuclease pancreatic delta-type (150 aa).

Residues 1 to 25 (MGLEKSLILFSLLVLVLGWVQPSLG) form the signal peptide. Position 35 (arginine 35) interacts with substrate. Histidine 37 functions as the Proton acceptor in the catalytic mechanism. Intrachain disulfides connect cysteine 51-cysteine 110, cysteine 65-cysteine 121, cysteine 83-cysteine 136, and cysteine 90-cysteine 98. Residues 66 to 70 (KRVNT), lysine 91, and arginine 111 each bind substrate. The active-site Proton donor is the histidine 145.

This sequence belongs to the pancreatic ribonuclease family. In terms of assembly, monomer.

It localises to the secreted. It carries out the reaction an [RNA] containing cytidine + H2O = an [RNA]-3'-cytidine-3'-phosphate + a 5'-hydroxy-ribonucleotide-3'-[RNA].. It catalyses the reaction an [RNA] containing uridine + H2O = an [RNA]-3'-uridine-3'-phosphate + a 5'-hydroxy-ribonucleotide-3'-[RNA].. Endonuclease that catalyzes the cleavage of RNA on the 3' side of pyrimidine nucleotides. Acts on single-stranded and double-stranded RNA. The sequence is that of Ribonuclease pancreatic delta-type from Rattus exulans (Polynesian rat).